The sequence spans 259 residues: Indole-diterpene biosynthesis cluster protein S (259 aa).

The next 5 helical transmembrane spans lie at 5 to 25 (EASG…GMVW), 64 to 84 (WFAL…AIIL), 87 to 107 (VYLI…LWVL), 134 to 154 (VLWF…AASF), and 221 to 241 (LGAG…PAAG).

Belongs to the ltmS family.

The protein localises to the membrane. Part of the gene cluster that mediates the biosynthesis of paspalitrems, indole-diterpene (IDT) mycotoxins that are potent tremorgens in mammals. The geranylgeranyl diphosphate (GGPP) synthase idtG is proposed to catalyze the first step in IDT biosynthesis via catalysis of a series of iterative condensations of isopentenyl diphosphate (IPP) with dimethylallyl diphosphate (DMAPP), geranyl diphosphate (GPP), and farnesyl diphosphate (FPP), to form GGPP. Condensation of indole-3-glycerol phosphate with GGPP by the prenyltransferase idtC then forms 3-geranylgeranylindole (3-GGI). Epoxidation of the two terminal alkenes of the geranylgeranyl moiety by the FAD-dependent monooxygenase idtM, and cyclization by the terpene cyclase idtB then leads to the production of paspaline. The cytochrome P450 monooxygenase idtP then catalyzes oxidative elimination of the pendant methyl group at C-12 of paspaline and generates the C-10 ketone to yield 13-desoxypaxilline. The cytochrome P450 monooxygenase idtQ may catalyze the C-13 oxidation of 13-desoxypaxilline to afford paxilline. Considering that both paspalicine and paxilline were detected in C.paspali, idtQ also catalyzes the formation of paspalinine from 13-desoxypaxilline via paspalicine as an intermediate. Finally, the alpha-prenyltransferase idtF prenylates paspalinine at the C-20 or the C-21 positions to yield paspalitrems A and C, respectively. The hydroxylation of paspalitrem A at C-32 by a still unknown oxidase affords paspalitrem B. The polypeptide is Indole-diterpene biosynthesis cluster protein S (Claviceps paspali (Rye ergot fungus)).